The following is a 576-amino-acid chain: Coilin (576 aa).

Serine 105 is modified (phosphoserine). Threonine 122 is subject to Phosphothreonine. Disordered stretches follow at residues 125–330 (DCKY…CLMS) and 352–389 (RPGPGLSSQTAGAAGWRRSGSNGGGQAPGASPSVSLPA). Glycyl lysine isopeptide (Lys-Gly) (interchain with G-Cter in SUMO2) cross-links involve residues lysine 127, lysine 151, and lysine 160. Serine 184 is subject to Phosphoserine; by VRK1 and VRK2. Residues lysine 204 and lysine 209 each participate in a glycyl lysine isopeptide (Lys-Gly) (interchain with G-Cter in SUMO2) cross-link. The segment covering 214–225 (QRCSSPKGSARN) has biased composition (polar residues). The 1-1 repeat unit spans residues 223-226 (ARNS). Residues 223-271 (ARNSLVKAKRKGSVSVCSKESPSSSSESESCDESISDGPSKVTLEARNS) are 2 X 4 AA repeats of A-R-N-S. Positions 235 to 250 (SVSVCSKESPSSSSES) are enriched in low complexity. Serine 248, serine 250, serine 256, serine 271, and serine 272 each carry phosphoserine. The 1-2 repeat unit spans residues 268–271 (ARNS). The segment covering 270–285 (NSSEKLPTELSKEEPS) has biased composition (basic and acidic residues). Glycyl lysine isopeptide (Lys-Gly) (interchain with G-Cter in SUMO2) cross-links involve residues lysine 274 and lysine 281. The residue at position 290 (threonine 290) is a Phosphothreonine. Residues lysine 293 and lysine 297 each participate in a glycyl lysine isopeptide (Lys-Gly) (interchain with G-Cter in SUMO2) cross-link. Position 301 is a phosphoserine (serine 301). Residues 301–320 (SLTPSKGKTSGTTSSSSDSS) are compositionally biased toward low complexity. Phosphothreonine is present on threonine 303. Residues 386–389 (SLPA) form a 2-1 repeat. A 2 X 4 AA repeats of S-L-P-A region spans residues 386–520 (SLPASLGRGW…DIEILSSLPA (135 aa)). Residues 392-420 (GRGWGREENLFSWKGAKGRGMRGRGRGRG) are required for interaction with SMN. A Phosphoserine modification is found at serine 403. A run of 4 repeats spans residues 413 to 414 (RG), 415 to 416 (RG), 417 to 418 (RG), and 419 to 420 (RG). The interval 413–420 (RGRGRGRG) is 4 X 2 AA tandem repeats of R-G. A Glycyl lysine isopeptide (Lys-Gly) (interchain with G-Cter in SUMO2) cross-link involves residue lysine 444. Threonine 456 carries the post-translational modification Phosphothreonine. The 100-residue stretch at 460 to 559 (DYSLLPLLAA…ITVFWKELID (100 aa)) folds into the Tudor; atypical domain. Phosphoserine occurs at positions 487 and 489. Residue lysine 496 forms a Glycyl lysine isopeptide (Lys-Gly) (interchain with G-Cter in SUMO2) linkage. The 2-2 repeat unit spans residues 517–520 (SLPA). Residue serine 566 is modified to Phosphoserine.

Belongs to the coilin family. In terms of assembly, interacts with ANKS1B. Interacts with SMN1 (via Tudor domain). Interacts (via C-terminus) with AK6. Interacts with WRAP53/TCAB1. Interacts with HMBOX1. Interacts with PSME3; the interaction is inhibited by PSME3IP1. Interacts wit UBL5. Symmetrical dimethylation of arginine residues within the RG repeat region enhances affinity for SMN, and thus localization of SMN complexes to CBs. Post-translationally, phosphorylated by VRK1. Phosphorylation during mitosis is associated with disassembly of CBs. As to expression, found in all the cell types examined.

It localises to the nucleus. The protein resides in the cajal body. In terms of biological role, component of nuclear coiled bodies, also known as Cajal bodies or CBs, which are involved in the modification and assembly of nucleoplasmic snRNPs. This is Coilin (COIL) from Homo sapiens (Human).